We begin with the raw amino-acid sequence, 449 residues long: Protein cortex (449 aa).

6 WD repeats span residues T108–G148, Y149–S188, N198–R237, D283–T327, T345–G382, and S386–K425. The short motif at S386–S397 is the D-box element.

Belongs to the WD repeat CORT family.

The protein resides in the cytoplasm. Functionally, controls wing pigmentation patterning by regulating scale cell development, thereby playing a key role in mimicry and crypsis. Probably acts as an activator of the anaphase promoting complex/cyclosome (APC/C) that promotes the ubiquitin ligase activity and substrate specificity of the APC/C. This chain is Protein cortex, found in Heliconius erato (Crimson patched longwing butterfly).